Here is a 505-residue protein sequence, read N- to C-terminus: Lysine--tRNA ligase (505 aa).

Glu-415 and Glu-422 together coordinate Mg(2+).

The protein belongs to the class-II aminoacyl-tRNA synthetase family. As to quaternary structure, homodimer. Requires Mg(2+) as cofactor.

It is found in the cytoplasm. The enzyme catalyses tRNA(Lys) + L-lysine + ATP = L-lysyl-tRNA(Lys) + AMP + diphosphate. This Xanthomonas oryzae pv. oryzae (strain MAFF 311018) protein is Lysine--tRNA ligase.